The chain runs to 105 residues: Large ribosomal subunit protein uL24 (105 aa).

The protein belongs to the universal ribosomal protein uL24 family. As to quaternary structure, part of the 50S ribosomal subunit.

Functionally, one of two assembly initiator proteins, it binds directly to the 5'-end of the 23S rRNA, where it nucleates assembly of the 50S subunit. One of the proteins that surrounds the polypeptide exit tunnel on the outside of the subunit. The protein is Large ribosomal subunit protein uL24 of Saccharophagus degradans (strain 2-40 / ATCC 43961 / DSM 17024).